An 827-amino-acid polypeptide reads, in one-letter code: Discs large homolog 1-like protein (827 aa).

Disordered stretches follow at residues 38–61 (HQDE…TPGP) and 102–133 (SPVV…ANPP). Positions 44–56 (GSPQEPSSPQFTD) are enriched in polar residues. PDZ domains lie at 159–246 (EITL…RRRK), 254–341 (EIKL…AKPN), and 403–484 (KVVL…QYRP). Positions 518–588 (KRSLYVRALF…PSKRRVEKKE (71 aa)) constitute an SH3 domain. A disordered region spans residues 595-618 (VKFNSKSREKGDNPDDMLSKGQSG). Residues 637–812 (SRPVIILGPM…IYDQVKQIIE (176 aa)) enclose the Guanylate kinase-like domain.

This sequence belongs to the MAGUK family.

The protein localises to the membrane. Functionally, may play a role in synapse assembly and function. The protein is Discs large homolog 1-like protein (dlg1l) of Danio rerio (Zebrafish).